The chain runs to 171 residues: Co-chaperone protein HscB homolog (171 aa).

Positions asparagine 2 to glutamine 74 constitute a J domain.

Belongs to the HscB family. In terms of assembly, interacts with HscA and stimulates its ATPase activity.

Co-chaperone involved in the maturation of iron-sulfur cluster-containing proteins. Seems to help targeting proteins to be folded toward HscA. The sequence is that of Co-chaperone protein HscB homolog from Vibrio atlanticus (strain LGP32) (Vibrio splendidus (strain Mel32)).